A 273-amino-acid polypeptide reads, in one-letter code: Probable ribosomal RNA small subunit methyltransferase A (273 aa).

S-adenosyl-L-methionine-binding residues include Asn23, Leu25, Gly50, Glu71, Asp95, and Asn110.

Belongs to the class I-like SAM-binding methyltransferase superfamily. rRNA adenine N(6)-methyltransferase family. RsmA subfamily.

It is found in the cytoplasm. Its function is as follows. Specifically dimethylates two adjacent adenosines in the loop of a conserved hairpin near the 3'-end of 16S rRNA in the 30S particle. May play a critical role in biogenesis of 30S subunits. The polypeptide is Probable ribosomal RNA small subunit methyltransferase A (Pyrococcus furiosus (strain ATCC 43587 / DSM 3638 / JCM 8422 / Vc1)).